The following is a 151-amino-acid chain: Small ribosomal subunit protein uS15 (151 aa).

This sequence belongs to the universal ribosomal protein uS15 family.

In Zea mays (Maize), this protein is Small ribosomal subunit protein uS15 (RPS13).